The chain runs to 351 residues: MTLLAETLSKIQAPDQTCVEQAKQRLDSLTKPPGSLGILEDIAWRLAGIQRVPLPQLPREKVSLVLAGDHGVVAEGVSAFPQEVTPQMIFNFLQGGAGINVLARQAGAKVVVADIGVAGPPLEKTGLVSCRVKSGTDNFAVGPAMSREEAVKSIEAGISLLQQQVKERPALVAIGEMGIGNTTPSAAILAAFTGMPVEEITGRGTGIDNQRLQHKIAVIKRGLEVNRPDANDGLDVLSKVGGLEIGGMAGIILGCAAEGIPVVLDGFISGAAALVAQSLAPLSREYMFASHGSVEPGHRIMLEKLGLKPMLQMEMRLGEGTGAALAYPIIESAVRIINEMATFAEAGVSKG.

Glutamate 319 functions as the Proton acceptor in the catalytic mechanism.

It belongs to the CobT family.

The catalysed reaction is 5,6-dimethylbenzimidazole + nicotinate beta-D-ribonucleotide = alpha-ribazole 5'-phosphate + nicotinate + H(+). It participates in nucleoside biosynthesis; alpha-ribazole biosynthesis; alpha-ribazole from 5,6-dimethylbenzimidazole: step 1/2. In terms of biological role, catalyzes the synthesis of alpha-ribazole-5'-phosphate from nicotinate mononucleotide (NAMN) and 5,6-dimethylbenzimidazole (DMB). In Desulforamulus reducens (strain ATCC BAA-1160 / DSM 100696 / MI-1) (Desulfotomaculum reducens), this protein is Nicotinate-nucleotide--dimethylbenzimidazole phosphoribosyltransferase.